The following is a 163-amino-acid chain: Cyclic pyranopterin monophosphate synthase (163 aa).

Residues 78-80 (LCH) and 116-117 (ME) contribute to the substrate site. Aspartate 131 is a catalytic residue.

Belongs to the MoaC family. Homohexamer; trimer of dimers.

It carries out the reaction (8S)-3',8-cyclo-7,8-dihydroguanosine 5'-triphosphate = cyclic pyranopterin phosphate + diphosphate. The protein operates within cofactor biosynthesis; molybdopterin biosynthesis. Its function is as follows. Catalyzes the conversion of (8S)-3',8-cyclo-7,8-dihydroguanosine 5'-triphosphate to cyclic pyranopterin monophosphate (cPMP). This chain is Cyclic pyranopterin monophosphate synthase, found in Agrobacterium fabrum (strain C58 / ATCC 33970) (Agrobacterium tumefaciens (strain C58)).